The following is a 70-amino-acid chain: UPF0352 protein Sden_2336 (70 aa).

Belongs to the UPF0352 family.

The chain is UPF0352 protein Sden_2336 from Shewanella denitrificans (strain OS217 / ATCC BAA-1090 / DSM 15013).